The primary structure comprises 188 residues: MKTAQEFRAGQVAIINGAPWVIQKAEFNKSGRNSAVVKMKLKNLLNGSATETVYKADDKLEPVILERKEVTYSYFADPLYVFMDNEFNQYEIEKDDLEGVMTFIEDGMTDVCEAVFYNDKVISVELPTTIVREIAYTEPSVRGDTSGKVMKTARLKNGAELQVSAFCEIGDSIEIDTRTGEYKSRVKA.

The protein belongs to the elongation factor P family.

The protein resides in the cytoplasm. Its pathway is protein biosynthesis; polypeptide chain elongation. Functionally, involved in peptide bond synthesis. Stimulates efficient translation and peptide-bond synthesis on native or reconstituted 70S ribosomes in vitro. Probably functions indirectly by altering the affinity of the ribosome for aminoacyl-tRNA, thus increasing their reactivity as acceptors for peptidyl transferase. The protein is Elongation factor P of Stutzerimonas stutzeri (strain A1501) (Pseudomonas stutzeri).